Here is a 194-residue protein sequence, read N- to C-terminus: A-type ATP synthase subunit E (194 aa).

Positions 35-56 are disordered; the sequence is DAEADADQIREEREAEVERTIE. Basic and acidic residues predominate over residues 41–56; it reads DQIREEREAEVERTIE.

Belongs to the V-ATPase E subunit family. As to quaternary structure, has multiple subunits with at least A(3), B(3), C, D, E, F, H, I and proteolipid K(x).

The protein resides in the cell membrane. Its function is as follows. Component of the A-type ATP synthase that produces ATP from ADP in the presence of a proton gradient across the membrane. The polypeptide is A-type ATP synthase subunit E (Haloarcula marismortui (strain ATCC 43049 / DSM 3752 / JCM 8966 / VKM B-1809) (Halobacterium marismortui)).